Here is a 479-residue protein sequence, read N- to C-terminus: Glucan 1,3-beta-glucosidase 2 (479 aa).

A signal peptide spans 1–21 (MMLFLIHLMALCCMFVAEVAC). N-linked (GlcNAc...) asparagine glycans are attached at residues N25, N29, N63, N104, N187, and N193. E227 acts as the Proton donor in catalysis. N-linked (GlcNAc...) asparagine glycosylation is found at N254, N285, and N288. The active-site Nucleophile is the H306. Residues N318 and N451 are each glycosylated (N-linked (GlcNAc...) asparagine). S456 carries GPI-anchor amidated serine lipidation. Positions 457 to 479 (SASAIASNKMTLLLAFLLVILVI) are cleaved as a propeptide — removed in mature form.

This sequence belongs to the glycosyl hydrolase 5 (cellulase A) family. In terms of processing, predicted to be a substrate for cleavage by KEX2.

It is found in the cell membrane. It localises to the secreted. It carries out the reaction Successive hydrolysis of beta-D-glucose units from the non-reducing ends of (1-&gt;3)-beta-D-glucans, releasing alpha-glucose.. Beta-glucanases participate in the metabolism of beta-glucan, the main structural component of the cell wall. EXG2 is not heavily involved in the exoglucanase function of the adhesion process. The protein is Glucan 1,3-beta-glucosidase 2 (EXG2) of Candida albicans (strain SC5314 / ATCC MYA-2876) (Yeast).